The following is a 189-amino-acid chain: Vacuolar iron transporter homolog 2 (189 aa).

The Cytoplasmic portion of the chain corresponds to 1–10; it reads MARAQWLRAA. A helical transmembrane segment spans residues 11–31; sequence VLGANDGLVSVASLMIGIGAV. At 32-38 the chain is on the vacuolar side; that stretch reads NENNKAM. Residues 39 to 59 traverse the membrane as a helical segment; the sequence is LVSGLAGLVAGACSMAIGEFV. Residues 60 to 97 are Cytoplasmic-facing; the sequence is SVYAQYDIEVTQIERDGDIDGADAAAAREKLPSPTQAA. A helical membrane pass occupies residues 98 to 118; that stretch reads FASALAFAIGGLLPLLTSGFI. Topologically, residues 119-124 are vacuolar; the sequence is KPWGPR. Residues 125 to 145 traverse the membrane as a helical segment; the sequence is VGVVCAASSVGLAGFGAAGGY. The Cytoplasmic portion of the chain corresponds to 146-159; it reads LGGANMVRSGTRVL. A helical transmembrane segment spans residues 160–180; it reads LGGWLAMLITYAVLRLFATIF. Topologically, residues 181–189 are vacuolar; it reads HGMNISSSA.

The protein belongs to the CCC1 family.

The protein localises to the vacuole membrane. The enzyme catalyses Fe(2+)(in) = Fe(2+)(out). Functionally, probable vacuolar iron transporter that may be involved in the regulation of iron distribution throughout the plant. The polypeptide is Vacuolar iron transporter homolog 2 (Oryza sativa subsp. japonica (Rice)).